The sequence spans 310 residues: D-apiose import binding protein (310 aa).

The N-terminal stretch at 1-21 (MKLLKASLVALSLAASTFVYA) is a signal peptide. D-apiofuranose-binding positions include Asn-35, 111–112 (DR), 158–160 (DTN), Arg-164, Asn-214, Asp-239, and Gln-260.

This sequence belongs to the bacterial solute-binding protein 2 family.

The protein resides in the periplasm. In terms of biological role, part of an ABC transporter complex involved in D-apiose import. Binds D-apiose, D-ribose and D-ribulose. The protein is D-apiose import binding protein of Actinobacillus succinogenes (strain ATCC 55618 / DSM 22257 / CCUG 43843 / 130Z).